The primary structure comprises 105 residues: ATP-dependent Clp protease adapter protein ClpS (105 aa).

This sequence belongs to the ClpS family. In terms of assembly, binds to the N-terminal domain of the chaperone ClpA.

In terms of biological role, involved in the modulation of the specificity of the ClpAP-mediated ATP-dependent protein degradation. The polypeptide is ATP-dependent Clp protease adapter protein ClpS (Prochlorococcus marinus (strain MIT 9515)).